Here is a 270-residue protein sequence, read N- to C-terminus: Proteasome subunit beta (270 aa).

Residues 1 to 47 constitute a propeptide, removed in mature form; by autocatalysis; sequence MSNRGRLGDAFLRPGSSSFLDFLSDHAPELLPGRSAAAGNAPLAPHA. Threonine 48 (nucleophile) is an active-site residue.

The protein belongs to the peptidase T1B family. The 20S proteasome core is composed of 14 alpha and 14 beta subunits that assemble into four stacked heptameric rings, resulting in a barrel-shaped structure. The two inner rings, each composed of seven catalytic beta subunits, are sandwiched by two outer rings, each composed of seven alpha subunits. The catalytic chamber with the active sites is on the inside of the barrel. Has a gated structure, the ends of the cylinder being occluded by the N-termini of the alpha-subunits. Is capped by the proteasome-associated ATPase, ARC.

Its subcellular location is the cytoplasm. The enzyme catalyses Cleavage of peptide bonds with very broad specificity.. It participates in protein degradation; proteasomal Pup-dependent pathway. With respect to regulation, the formation of the proteasomal ATPase ARC-20S proteasome complex, likely via the docking of the C-termini of ARC into the intersubunit pockets in the alpha-rings, may trigger opening of the gate for substrate entry. Interconversion between the open-gate and close-gate conformations leads to a dynamic regulation of the 20S proteasome proteolysis activity. Functionally, component of the proteasome core, a large protease complex with broad specificity involved in protein degradation. The polypeptide is Proteasome subunit beta (Xylanimonas cellulosilytica (strain DSM 15894 / JCM 12276 / CECT 5975 / KCTC 9989 / LMG 20990 / NBRC 107835 / XIL07)).